A 134-amino-acid chain; its full sequence is Small ribosomal subunit protein uS9 (134 aa).

Residues 98-114 (SKQELKSHGFLTRDPRK) are compositionally biased toward basic and acidic residues. The interval 98–134 (SKQELKSHGFLTRDPRKKERKKYGHKKARKSFQFSKR) is disordered. A compositionally biased stretch (basic residues) spans 115–134 (KERKKYGHKKARKSFQFSKR).

This sequence belongs to the universal ribosomal protein uS9 family.

This Chlamydia caviae (strain ATCC VR-813 / DSM 19441 / 03DC25 / GPIC) (Chlamydophila caviae) protein is Small ribosomal subunit protein uS9.